A 394-amino-acid chain; its full sequence is Elongation factor Tu 1 (394 aa).

The tr-type G domain occupies 10-204; the sequence is KPHVNVGTIG…YLDSYIPEPE (195 aa). Residues 19–26 form a G1 region; that stretch reads GHVDHGKT. 19-26 contacts GTP; it reads GHVDHGKT. Threonine 26 is a binding site for Mg(2+). Residues 60-64 form a G2 region; sequence GITIN. A G3 region spans residues 81 to 84; it reads DCPG. GTP contacts are provided by residues 81 to 85 and 136 to 139; these read DCPGH and NKCD. The segment at 136–139 is G4; that stretch reads NKCD. Positions 174–176 are G5; it reads SAL.

Belongs to the TRAFAC class translation factor GTPase superfamily. Classic translation factor GTPase family. EF-Tu/EF-1A subfamily. Monomer.

Its subcellular location is the cytoplasm. The enzyme catalyses GTP + H2O = GDP + phosphate + H(+). Functionally, GTP hydrolase that promotes the GTP-dependent binding of aminoacyl-tRNA to the A-site of ribosomes during protein biosynthesis. This Serratia proteamaculans (strain 568) protein is Elongation factor Tu 1.